The chain runs to 531 residues: Acetate CoA-transferase YdiF (531 aa).

The 5-glutamyl coenzyme A thioester intermediate role is filled by E333.

The protein belongs to the 3-oxoacid CoA-transferase family. Homotetramer; dimer of dimers.

It carries out the reaction an acyl-CoA + acetate = a carboxylate + acetyl-CoA. Functionally, coA transferase having broad substrate specificity for short-chain acyl-CoA thioesters with the activity decreasing when the length of the carboxylic acid chain exceeds four carbons. Exhibits high activity with acetoacetyl-CoA, propionyl-CoA, crotonoyl-CoA or butyryl-CoA as donors, with acetate as an acceptor. When acetyl-CoA is used as the donor, propionate, acetoacetate, butyrate, isobutyrate, and 4-hydroxybutyrate can be utilized as acceptors but not isovalerate. May play a role in short-chain fatty acid metabolism in E.coli. The protein is Acetate CoA-transferase YdiF of Escherichia coli O157:H7.